A 514-amino-acid polypeptide reads, in one-letter code: ATP synthase subunit alpha (514 aa).

170 to 177 (GDRQIGKT) serves as a coordination point for ATP.

It belongs to the ATPase alpha/beta chains family. F-type ATPases have 2 components, CF(1) - the catalytic core - and CF(0) - the membrane proton channel. CF(1) has five subunits: alpha(3), beta(3), gamma(1), delta(1), epsilon(1). CF(0) has three main subunits: a(1), b(2) and c(9-12). The alpha and beta chains form an alternating ring which encloses part of the gamma chain. CF(1) is attached to CF(0) by a central stalk formed by the gamma and epsilon chains, while a peripheral stalk is formed by the delta and b chains.

It is found in the cell inner membrane. It carries out the reaction ATP + H2O + 4 H(+)(in) = ADP + phosphate + 5 H(+)(out). In terms of biological role, produces ATP from ADP in the presence of a proton gradient across the membrane. The alpha chain is a regulatory subunit. This is ATP synthase subunit alpha from Pseudomonas entomophila (strain L48).